The primary structure comprises 392 residues: Protein SRL2 (392 aa).

Position 11 is a phosphoserine (S11). The interval 18–52 is disordered; sequence KPSETPKMEEEKLEVTNVNASSSKKVHKSKKSTSK. Residues 21-31 are compositionally biased toward basic and acidic residues; sequence ETPKMEEEKLE. Positions 41 to 50 are enriched in basic residues; that stretch reads KKVHKSKKST. S139 bears the Phosphoserine mark. The segment at 284–303 is disordered; sequence EDSTAVTNENGHISSEKNLK. Residues 287–296 show a composition bias toward polar residues; sequence TAVTNENGHI.

It localises to the cytoplasm. The protein resides in the nucleus. The polypeptide is Protein SRL2 (SRL2) (Saccharomyces cerevisiae (strain ATCC 204508 / S288c) (Baker's yeast)).